Here is a 439-residue protein sequence, read N- to C-terminus: MATGTDFFDQATIVVRAGNGGNGAATFRREKYVPRGGPNGGDGGRGGHVYLIADPEYNTLLHFRYQRKFVAENGGHGGKNAMHGRNGADVYVPVPPGTVVRATINGVTYTVDLARPGQRLLAARGGRGGLGNIHFTTPTRQAPRLAELGEPGQELTLELELKMLADVGLVGFPNAGKSTLLSVISAARPKIAAYPFTTLTPNLGIVEVGVQRFVVADIPGLIEGAHAGVGLGHDFLRHIERTRLLIHIIDAAGVDGRTPWDDYEQINTELRLYQPELAQRKQVVALNKADLPAAQANLPILRERLPVAPEDLFVISAATRAGIEPLLQRVAELLRADPPPQRDPVDPDEPPLEWPLPPVDENAFTVEREGDAFRVRGVKIERLIAMSNLEQDEAIDRIQRVLEASGINEALMAAGVQDGDVVRIGRAELVWDDSGQHAL.

An Obg domain is found at 5-164; the sequence is TDFFDQATIV…LTLELELKML (160 aa). In terms of domain architecture, OBG-type G spans 165–335; the sequence is ADVGLVGFPN…LLQRVAELLR (171 aa). GTP is bound by residues 171 to 178, 196 to 200, 217 to 220, 287 to 290, and 316 to 318; these read GFPNAGKS, FTTLT, DIPG, NKAD, and SAA. The Mg(2+) site is built by S178 and T198. A disordered region spans residues 337 to 359; sequence DPPPQRDPVDPDEPPLEWPLPPV. Residues 356 to 433 enclose the OCT domain; sequence LPPVDENAFT…IGRAELVWDD (78 aa).

The protein belongs to the TRAFAC class OBG-HflX-like GTPase superfamily. OBG GTPase family. In terms of assembly, monomer. Requires Mg(2+) as cofactor.

The protein resides in the cytoplasm. Its function is as follows. An essential GTPase which binds GTP, GDP and possibly (p)ppGpp with moderate affinity, with high nucleotide exchange rates and a fairly low GTP hydrolysis rate. Plays a role in control of the cell cycle, stress response, ribosome biogenesis and in those bacteria that undergo differentiation, in morphogenesis control. In Chloroflexus aggregans (strain MD-66 / DSM 9485), this protein is GTPase Obg.